A 287-amino-acid chain; its full sequence is 2-dehydro-3-deoxyphosphooctonate aldolase (287 aa).

Belongs to the KdsA family.

It is found in the cytoplasm. It catalyses the reaction D-arabinose 5-phosphate + phosphoenolpyruvate + H2O = 3-deoxy-alpha-D-manno-2-octulosonate-8-phosphate + phosphate. Its pathway is carbohydrate biosynthesis; 3-deoxy-D-manno-octulosonate biosynthesis; 3-deoxy-D-manno-octulosonate from D-ribulose 5-phosphate: step 2/3. The protein operates within bacterial outer membrane biogenesis; lipopolysaccharide biosynthesis. The chain is 2-dehydro-3-deoxyphosphooctonate aldolase from Nitrobacter hamburgensis (strain DSM 10229 / NCIMB 13809 / X14).